A 410-amino-acid chain; its full sequence is Peptidase T (410 aa).

H79 serves as a coordination point for Zn(2+). Residue D81 is part of the active site. D142 contacts Zn(2+). Catalysis depends on E176, which acts as the Proton acceptor. Zn(2+)-binding residues include E177, D199, and H381.

The protein belongs to the peptidase M20B family. The cofactor is Zn(2+).

It localises to the cytoplasm. It catalyses the reaction Release of the N-terminal residue from a tripeptide.. In terms of biological role, cleaves the N-terminal amino acid of tripeptides. The polypeptide is Peptidase T (pepT) (Bacillus subtilis (strain 168)).